The primary structure comprises 368 residues: Glutamate 5-kinase (368 aa).

Residue lysine 9 participates in ATP binding. Substrate contacts are provided by serine 49, aspartate 136, and asparagine 148. Residues 168 to 169 and 210 to 216 contribute to the ATP site; these read TD and TGGMMTK. The PUA domain maps to 275 to 353; the sequence is AGIITIDDGA…ADIENVLGYE (79 aa).

This sequence belongs to the glutamate 5-kinase family.

It localises to the cytoplasm. It carries out the reaction L-glutamate + ATP = L-glutamyl 5-phosphate + ADP. Its pathway is amino-acid biosynthesis; L-proline biosynthesis; L-glutamate 5-semialdehyde from L-glutamate: step 1/2. Catalyzes the transfer of a phosphate group to glutamate to form L-glutamate 5-phosphate. In Haemophilus influenzae (strain 86-028NP), this protein is Glutamate 5-kinase.